A 76-amino-acid chain; its full sequence is uncharacterized protein (76 aa).

EF-hand domains follow at residues 9-44 and 43-76; these read EMDE…LGEN and ENLT…IHIS.

The protein resides in the cytoplasm. It localises to the nucleus. This is an uncharacterized protein from Schizosaccharomyces pombe (strain 972 / ATCC 24843) (Fission yeast).